Consider the following 467-residue polypeptide: MRANSKAKPVSRAALAGEADPRLVALSVSIQDDGALYAEDIRGSQAHVSMLAAQGIVPKAAARRIVAALDQVRAEFAAGRIRFDPALEDVHTHVERRLGELVGKDAGYLHAGRSRNDQVALDERLFIVGACDRCDAALERLQRAFLGQARAHERTILPGYTHLQRAQPVSLAHHLLAYVEMFGRDRERFAEVRRRAAVSPLGSGALAGTTLPLDREAVAARLGLAGVTHNSLDAVSDRDSAAELLFACALAAVHLSRIGEELVLWTTKEFGFATLSDAFATGSSLMPQKKNPDVGELARGRAGRALGDLVALLAILKGLPLSYNRDLQEDKRPLLGGPEALVLTADAVAGAVGTATFHAERMEEALGSGEALATDAAEYLVERGVPFREAHEAVGKAAAFSAREGRPMARLTAAEWASFHRRFEKDVLRCFDARRSLKRRELPGAPGPRAVRAELRRWEKALGKARR.

The protein belongs to the lyase 1 family. Argininosuccinate lyase subfamily.

It localises to the cytoplasm. It carries out the reaction 2-(N(omega)-L-arginino)succinate = fumarate + L-arginine. The protein operates within amino-acid biosynthesis; L-arginine biosynthesis; L-arginine from L-ornithine and carbamoyl phosphate: step 3/3. The sequence is that of Argininosuccinate lyase from Anaeromyxobacter dehalogenans (strain 2CP-C).